The sequence spans 384 residues: Putative ankyrin repeat protein L72 (384 aa).

ANK repeat units follow at residues 88–117 (ADMC…NIKN), 119–146 (GNLL…KEFS), 171–200 (DHNV…ILSV), 202–231 (DDSL…DIES), 233–261 (NNYC…NPNN), 298–324 (ILYQ…AGIK), and 325–357 (PTNS…DINV).

The chain is Putative ankyrin repeat protein L72 from Acanthamoeba polyphaga (Amoeba).